The following is a 56-amino-acid chain: Ovomucoid (56 aa).

One can recognise a Kazal-like domain in the interval 6 to 56; the sequence is VDCSDHPKPACLQEQKPLCGSDNKTYDNKCSFCNAVVDSNGTLTLSHFGKC. 3 disulfide bridges follow: Cys8/Cys38, Cys16/Cys35, and Cys24/Cys56. A glycan (N-linked (GlcNAc...) asparagine) is linked at Asn45.

The protein localises to the secreted. In Pipile pipile (Trinidad piping guan), this protein is Ovomucoid.